We begin with the raw amino-acid sequence, 804 residues long: General transcription and DNA repair factor IIH helicase/translocase subunit XPB (804 aa).

2 disordered regions span residues 1 to 61 and 220 to 255; these read MSLK…NSNE and QSSKQKSSKPSNEDNVEDKKDITNDSSKETAEKSSS. A compositionally biased stretch (acidic residues) spans 14-36; that stretch reads PDEDLEEYSDYSDVDNYGEEDDD. Composition is skewed to low complexity over residues 47-60 and 220-229; these read NNNKTKAQTTTNSN and QSSKQKSSKP. Positions 236–255 are enriched in basic and acidic residues; sequence EDKKDITNDSSKETAEKSSS. In terms of domain architecture, Helicase ATP-binding spans 335–497; it reads MFGNGRARSG…DLNFLIGPKM (163 aa). Residue 348–355 participates in ATP binding; the sequence is LPCGAGKT. The DEVH box signature appears at 450–453; sequence DEVH. Residues 551–705 form the Helicase C-terminal domain; the sequence is QACQFLIDYH…KVITNLKGME (155 aa). Disordered regions lie at residues 736–761 and 782–804; these read DDGEDTSFGSRSLSRAPAKAKRSSGS and KQLKKDSKEHHALFRKHLYTKRR. Residues 784 to 793 are compositionally biased toward basic and acidic residues; the sequence is LKKDSKEHHA. The span at 794 to 804 shows a compositional bias: basic residues; sequence LFRKHLYTKRR.

The protein belongs to the helicase family. RAD25/XPB subfamily. As to quaternary structure, component of the 7-subunit TFIIH core complex composed of XPB/ptr8, XPD/rad15, ssl1, tfb1, tfb2, tfb4 and tfb5, which is active in NER. The core complex associates with the 3-subunit CTD-kinase module TFIIK composed of mcs2/cyclin H, mcs6/cdk7 and pmh1/tfb3 to form the 10-subunit holoenzyme (holo-TFIIH) active in transcription.

The protein localises to the nucleus. The catalysed reaction is Couples ATP hydrolysis with the unwinding of duplex DNA by translocating in the 3'-5' direction.. The enzyme catalyses ATP + H2O = ADP + phosphate + H(+). Its function is as follows. Probable ATP-dependent 3'-5' DNA helicase/translocase. Binds dsDNA rather than ssDNA, unzipping it in a translocase rather than classical helicase activity. Component of the general transcription and DNA repair factor IIH (TFIIH) core complex. When complexed to CDK-activating kinase (CAK), involved in RNA transcription by RNA polymerase II. Also involved in transcription-coupled nucleotide excision repair (NER) of damaged DNA. In NER, TFIIH acts by opening DNA around the lesion to allow the excision of the damaged oligonucleotide and its replacement by a new DNA fragment. The ATPase activity of XPB/ptr8, but not its helicase activity, is required for DNA opening. In transcription, TFIIH has an essential role in transcription initiation. When the pre-initiation complex (PIC) has been established, TFIIH is required for promoter opening and promoter escape. The ATP-dependent helicase activity of XPB/ptr8 is required for promoter escape but not for promoter opening. Plays a role in mRNA export. The sequence is that of General transcription and DNA repair factor IIH helicase/translocase subunit XPB from Schizosaccharomyces pombe (strain 972 / ATCC 24843) (Fission yeast).